Reading from the N-terminus, the 336-residue chain is tRNA(Ile)-lysidine synthase (336 aa).

40–45 (SGGQDS) serves as a coordination point for ATP.

Belongs to the tRNA(Ile)-lysidine synthase family.

Its subcellular location is the cytoplasm. The catalysed reaction is cytidine(34) in tRNA(Ile2) + L-lysine + ATP = lysidine(34) in tRNA(Ile2) + AMP + diphosphate + H(+). In terms of biological role, ligates lysine onto the cytidine present at position 34 of the AUA codon-specific tRNA(Ile) that contains the anticodon CAU, in an ATP-dependent manner. Cytidine is converted to lysidine, thus changing the amino acid specificity of the tRNA from methionine to isoleucine. This chain is tRNA(Ile)-lysidine synthase, found in Prochlorococcus marinus (strain SARG / CCMP1375 / SS120).